A 190-amino-acid polypeptide reads, in one-letter code: Cytidylate kinase (190 aa).

Residue 7 to 15 coordinates ATP; it reads GKIGSGKST.

The protein belongs to the cytidylate kinase family. Type 2 subfamily.

Its subcellular location is the cytoplasm. The enzyme catalyses CMP + ATP = CDP + ADP. It carries out the reaction dCMP + ATP = dCDP + ADP. The polypeptide is Cytidylate kinase (Thermoplasma volcanium (strain ATCC 51530 / DSM 4299 / JCM 9571 / NBRC 15438 / GSS1)).